The following is a 262-amino-acid chain: Carbonic anhydrase 1 (262 aa).

Residue alanine 2 is modified to N-acetylalanine. Positions 4-261 (LNWSYEGENG…LKGRQVKASF (258 aa)) constitute an Alpha-carbonic anhydrase domain. Histidine 65 serves as the catalytic Proton donor/acceptor. Residues histidine 95, histidine 97, and histidine 120 each contribute to the Zn(2+) site. Residues threonine 200 and 200–201 (TH) each bind substrate.

It belongs to the alpha-carbonic anhydrase family. Requires Zn(2+) as cofactor.

The protein localises to the cytoplasm. It carries out the reaction hydrogencarbonate + H(+) = CO2 + H2O. The enzyme catalyses urea = cyanamide + H2O. Its activity is regulated as follows. Inhibited by acetazolamide. Functionally, catalyzes the reversible hydration of carbon dioxide. Can hydrate cyanamide to urea. This chain is Carbonic anhydrase 1 (CA1), found in Monodelphis domestica (Gray short-tailed opossum).